Here is a 729-residue protein sequence, read N- to C-terminus: Probable cyclic di-GMP phosphodiesterase PdeA (729 aa).

A run of 8 helical transmembrane segments spans residues 17-37, 41-61, 83-103, 126-146, 163-183, 214-234, 238-258, and 289-309; these read AFTL…LAII, YIFL…IFGW, FLQT…ACAI, FWLG…VGSF, IFTV…NMLF, AFTL…CTPY, FIAG…VGKL, and YSLA…LYMV. The GGDEF domain occupies 348–476; sequence AGKSFCCLRI…AHHHVLALDS (129 aa). Residues 488–729 form the EAL domain; the sequence is QVLLLNTIRT…LIGRPQPLAD (242 aa).

The protein resides in the cell membrane. The enzyme catalyses 3',3'-c-di-GMP + H2O = 5'-phosphoguanylyl(3'-&gt;5')guanosine + H(+). Functionally, phosphodiesterase (PDE) that catalyzes the hydrolysis of cyclic-di-GMP (c-di-GMP) to 5'-pGpG. The polypeptide is Probable cyclic di-GMP phosphodiesterase PdeA (Escherichia coli (strain K12)).